A 346-amino-acid chain; its full sequence is Golgi-associated RAB2 interactor protein 2 (346 aa).

The tract at residues 275–346 is disordered; it reads TPVESEANTS…EKHVRQPKDF (72 aa). Composition is skewed to basic and acidic residues over residues 283–297 and 334–346; these read TSKE…EKTP and KLVE…PKDF.

This sequence belongs to the GARIN family. In terms of assembly, interacts with CALM1.

Its subcellular location is the cell projection. The protein localises to the cilium. It localises to the flagellum. Seems to play a role in sperm motility. In Macaca fascicularis (Crab-eating macaque), this protein is Golgi-associated RAB2 interactor protein 2 (GARIN2).